A 65-amino-acid polypeptide reads, in one-letter code: Large ribosomal subunit protein bL35 (65 aa).

The disordered stretch occupies residues 1–26; sequence MPKIKTVRGAAKRFKKTASGGFKRKQ. Residues 10-26 are compositionally biased toward basic residues; that stretch reads AAKRFKKTASGGFKRKQ.

The protein belongs to the bacterial ribosomal protein bL35 family.

The polypeptide is Large ribosomal subunit protein bL35 (Haemophilus ducreyi (strain 35000HP / ATCC 700724)).